Consider the following 508-residue polypeptide: Photosystem II CP47 reaction center protein (508 aa).

6 helical membrane passes run 21–36, 101–115, 140–156, 203–218, 237–252, and 457–472; these read SVHI…WAGS, IVFS…IWHW, GIHL…FGAF, IAAG…FHLS, VLSS…AFVV, and SFAL…HGSR.

Belongs to the PsbB/PsbC family. PsbB subfamily. As to quaternary structure, PSII is composed of 1 copy each of membrane proteins PsbA, PsbB, PsbC, PsbD, PsbE, PsbF, PsbH, PsbI, PsbJ, PsbK, PsbL, PsbM, PsbT, PsbX, PsbY, PsbZ, Psb30/Ycf12, at least 3 peripheral proteins of the oxygen-evolving complex and a large number of cofactors. It forms dimeric complexes. Binds multiple chlorophylls. PSII binds additional chlorophylls, carotenoids and specific lipids. serves as cofactor.

It localises to the plastid. The protein resides in the chloroplast thylakoid membrane. One of the components of the core complex of photosystem II (PSII). It binds chlorophyll and helps catalyze the primary light-induced photochemical processes of PSII. PSII is a light-driven water:plastoquinone oxidoreductase, using light energy to abstract electrons from H(2)O, generating O(2) and a proton gradient subsequently used for ATP formation. The polypeptide is Photosystem II CP47 reaction center protein (Lepidium virginicum (Virginia pepperweed)).